A 420-amino-acid polypeptide reads, in one-letter code: Pre-mRNA-splicing factor RBM22 (420 aa).

An N-acetylalanine modification is found at A2. Phosphoserine is present on residues S4 and S102. Residues K139 and K149 each participate in a glycyl lysine isopeptide (Lys-Gly) (interchain with G-Cter in SUMO2) cross-link. The C3H1-type zinc finger occupies 159–186 (RNRPHICSFWVKGECKRGEECPYRHEKP). K212 bears the N6-acetyllysine mark. Positions 232 to 305 (TTLYVGGLGD…RRLNVKWGRS (74 aa)) constitute an RRM domain. K290 is covalently cross-linked (Glycyl lysine isopeptide (Lys-Gly) (interchain with G-Cter in SUMO2)). 2 disordered regions span residues 303–343 (GRSQ…AAEE) and 372–420 (APPP…HSSP). The segment covering 309 to 318 (RGKEKEKDGT) has biased composition (basic and acidic residues).

It belongs to the SLT11 family. Component of the pre-catalytic and catalytic spliceosome complexes. Component of the postcatalytic spliceosome P complex. Interacts with PDCD6; the interaction induces translocation of PDCD6 in the cytoplasm. Interacts with PPIL1.

The protein resides in the nucleus. Its subcellular location is the cytoplasm. In terms of biological role, required for pre-mRNA splicing as component of the activated spliceosome. Involved in the first step of pre-mRNA splicing. Binds directly to the internal stem-loop (ISL) domain of the U6 snRNA and to the pre-mRNA intron near the 5' splice site during the activation and catalytic phases of the spliceosome cycle. Involved in both translocations of the nuclear SLU7 to the cytoplasm and the cytosolic calcium-binding protein PDCD6 to the nucleus upon cellular stress responses. In Bos taurus (Bovine), this protein is Pre-mRNA-splicing factor RBM22 (RBM22).